The sequence spans 556 residues: Innexin-7 (556 aa).

Helical transmembrane passes span 21–41 (LVAS…AVLI), 127–147 (FFLL…KYFA), and 213–233 (AYYV…NVIL). Asn-267 is a glycosylation site (N-linked (GlcNAc...) asparagine). Residues 310 to 330 (IFVFLWAWYILLTAFTVGNLF) traverse the membrane as a helical segment. Residues 431-556 (DESQVESGKN…IPKTAEKKHW (126 aa)) form a disordered region. Over residues 435–447 (VESGKNTAPSTSH) the composition is skewed to polar residues. Residues 452–461 (RGTEQLEKNV) show a composition bias toward basic and acidic residues. Residues 463-474 (SRQGSLSTQLRP) are compositionally biased toward polar residues. The span at 500-513 (KGSKKPSPTKKKAS) shows a compositional bias: basic residues. A compositionally biased stretch (low complexity) spans 514 to 527 (SKNSPQSSSNSRRP). A compositionally biased stretch (basic and acidic residues) spans 539–556 (HHHEPDSKIPKTAEKKHW).

This sequence belongs to the pannexin family.

It localises to the cell membrane. Its subcellular location is the cell junction. The protein localises to the gap junction. Structural component of the gap junctions. This is Innexin-7 (inx-7) from Caenorhabditis elegans.